Here is a 214-residue protein sequence, read N- to C-terminus: Pyrrolidone-carboxylate peptidase (214 aa).

Catalysis depends on residues E80, C143, and H166.

Belongs to the peptidase C15 family. In terms of assembly, homotetramer.

The protein localises to the cytoplasm. It catalyses the reaction Release of an N-terminal pyroglutamyl group from a polypeptide, the second amino acid generally not being Pro.. Removes 5-oxoproline from various penultimate amino acid residues except L-proline. The polypeptide is Pyrrolidone-carboxylate peptidase (Enterobacter sp. (strain 638)).